The following is a 348-amino-acid chain: Casein kinase II subunit alpha (348 aa).

Residues 55 to 340 (YEIVRKIGRG…PLEAMEHPFF (286 aa)) enclose the Protein kinase domain. Residues 61–69 (IGRGKFSEV) and lysine 84 contribute to the ATP site. Aspartate 172 functions as the Proton acceptor in the catalytic mechanism.

This sequence belongs to the protein kinase superfamily. Ser/Thr protein kinase family. CK2 subfamily. As to quaternary structure, tetramer of two alpha and two beta chains.

Its subcellular location is the cytoplasm. It catalyses the reaction L-seryl-[protein] + ATP = O-phospho-L-seryl-[protein] + ADP + H(+). The catalysed reaction is L-threonyl-[protein] + ATP = O-phospho-L-threonyl-[protein] + ADP + H(+). In terms of biological role, casein kinases are operationally defined by their preferential utilization of acidic proteins such as caseins as substrates. The alpha chain contains the catalytic site. This Theileria annulata protein is Casein kinase II subunit alpha.